We begin with the raw amino-acid sequence, 255 residues long: Phosphoribosylaminoimidazole-succinocarboxamide synthase A (255 aa).

This sequence belongs to the SAICAR synthetase family.

The catalysed reaction is 5-amino-1-(5-phospho-D-ribosyl)imidazole-4-carboxylate + L-aspartate + ATP = (2S)-2-[5-amino-1-(5-phospho-beta-D-ribosyl)imidazole-4-carboxamido]succinate + ADP + phosphate + 2 H(+). It participates in purine metabolism; IMP biosynthesis via de novo pathway; 5-amino-1-(5-phospho-D-ribosyl)imidazole-4-carboxamide from 5-amino-1-(5-phospho-D-ribosyl)imidazole-4-carboxylate: step 1/2. The polypeptide is Phosphoribosylaminoimidazole-succinocarboxamide synthase A (purC1) (Bradyrhizobium diazoefficiens (strain JCM 10833 / BCRC 13528 / IAM 13628 / NBRC 14792 / USDA 110)).